Here is a 422-residue protein sequence, read N- to C-terminus: Serine--tRNA ligase (422 aa).

229–231 (TAE) is a binding site for L-serine. Residue 260 to 262 (RKE) participates in ATP binding. Position 283 (E283) interacts with L-serine. Position 347–350 (347–350 (EISS)) interacts with ATP. Position 383 (S383) interacts with L-serine.

The protein belongs to the class-II aminoacyl-tRNA synthetase family. Type-1 seryl-tRNA synthetase subfamily. In terms of assembly, homodimer. The tRNA molecule binds across the dimer.

The protein resides in the cytoplasm. It catalyses the reaction tRNA(Ser) + L-serine + ATP = L-seryl-tRNA(Ser) + AMP + diphosphate + H(+). The enzyme catalyses tRNA(Sec) + L-serine + ATP = L-seryl-tRNA(Sec) + AMP + diphosphate + H(+). Its pathway is aminoacyl-tRNA biosynthesis; selenocysteinyl-tRNA(Sec) biosynthesis; L-seryl-tRNA(Sec) from L-serine and tRNA(Sec): step 1/1. Functionally, catalyzes the attachment of serine to tRNA(Ser). Is also able to aminoacylate tRNA(Sec) with serine, to form the misacylated tRNA L-seryl-tRNA(Sec), which will be further converted into selenocysteinyl-tRNA(Sec). The protein is Serine--tRNA ligase of Geobacter sp. (strain M21).